A 1204-amino-acid chain; its full sequence is Cingulin (1204 aa).

The head stretch occupies residues methionine 7–alanine 357. Positions glutamate 25 to alanine 48 are disordered. The ZIM motif lies at alanine 48–glycine 62. The interaction with TJP1/ZO1 stretch occupies residues alanine 54–valine 67. 2 disordered regions span residues leucine 68–proline 174 and aspartate 186–alanine 266. Polar residues predominate over residues alanine 93 to threonine 119. Phosphoserine is present on residues serine 95, serine 96, serine 98, serine 135, serine 137, serine 140, serine 155, serine 165, serine 214, and serine 217. Positions glutamate 207–serine 231 are enriched in basic and acidic residues. Positions threonine 232–valine 245 are enriched in polar residues. Residues serine 247–serine 261 show a composition bias toward low complexity. Residues serine 258, serine 276, serine 338, and serine 351 each carry the phosphoserine modification. Positions methionine 358–alanine 1161 form a coiled coil. The segment at valine 379–glutamate 398 is disordered. Lysine 579 is subject to N6-acetyllysine. Residues alanine 1161 to aspartate 1182 form a disordered region. A tail region spans residues serine 1162–cysteine 1204. Phosphoserine is present on residues serine 1176, serine 1177, and serine 1183.

Belongs to the cingulin family. Homodimer. Interacts with TJP1/ZO1 and SPEF1.

The protein resides in the cell junction. The protein localises to the tight junction. Probably plays a role in the formation and regulation of the tight junction (TJ) paracellular permeability barrier. The polypeptide is Cingulin (Plecturocebus moloch (Dusky titi monkey)).